The chain runs to 766 residues: Single-minded homolog 1 (766 aa).

Residues 1-53 (MKEKSKNAARTRREKENSEFYELAKLLPLPSAITSQLDKASIIRLTTSYLKMR) form the bHLH domain. PAS domains are found at residues 77–147 (GREL…QPYH) and 218–288 (PPSA…LVKG). The PAC domain maps to 292-335 (TKYYRFLAKHGGWVWVQSYATIVHNSRSSRPHCIVSVNYVLTDT). Positions 336–766 (EYKGLQLSLD…GTSVIITNGS (431 aa)) constitute a Single-minded C-terminal domain. Residues 353 to 365 (AFSYTSSSTPTMT) show a composition bias toward polar residues. 2 disordered regions span residues 353 to 431 (AFSY…SQHD) and 528 to 563 (WDED…EPSK). A Nuclear localization signal motif is present at residues 368-387 (RKGAKSRLSSSKSKSRTSPY). A compositionally biased stretch (low complexity) spans 373 to 385 (SRLSSSKSKSRTS). Over residues 394–404 (HTERSESDHDS) the composition is skewed to basic and acidic residues.

In terms of assembly, efficient DNA binding requires dimerization with another bHLH protein. Heterodimer; forms a heterodimer with ARNT, ARNT2.

It is found in the nucleus. Functionally, transcriptional factor that may have pleiotropic effects during embryogenesis and in the adult. This chain is Single-minded homolog 1 (SIM1), found in Pan paniscus (Pygmy chimpanzee).